Here is a 445-residue protein sequence, read N- to C-terminus: Glutamyl-tRNA(Gln) amidotransferase subunit D (445 aa).

An Asparaginase/glutaminase domain is found at 93-425; sequence SEIKIISTGG…EKIRSLMISN (333 aa). Active-site residues include T103, T179, D180, and K258.

The protein belongs to the asparaginase 1 family. GatD subfamily. Heterodimer of GatD and GatE.

The catalysed reaction is L-glutamyl-tRNA(Gln) + L-glutamine + ATP + H2O = L-glutaminyl-tRNA(Gln) + L-glutamate + ADP + phosphate + H(+). In terms of biological role, allows the formation of correctly charged Gln-tRNA(Gln) through the transamidation of misacylated Glu-tRNA(Gln) in organisms which lack glutaminyl-tRNA synthetase. The reaction takes place in the presence of glutamine and ATP through an activated gamma-phospho-Glu-tRNA(Gln). The GatDE system is specific for glutamate and does not act on aspartate. The sequence is that of Glutamyl-tRNA(Gln) amidotransferase subunit D from Saccharolobus islandicus (strain M.16.27) (Sulfolobus islandicus).